The primary structure comprises 271 residues: Phosphatidylglycerol--prolipoprotein diacylglyceryl transferase (271 aa).

4 consecutive transmembrane segments (helical) span residues 18–38 (LSVH…LWMA), 51–71 (IFID…RAYY), 89–109 (IWKG…TGIV), and 115–135 (GISF…GQAI). Arg137 lines the a 1,2-diacyl-sn-glycero-3-phospho-(1'-sn-glycerol) pocket. 3 helical membrane passes run 177–197 (HPTF…LLLL), 205–225 (GNLF…IEGM), and 236–256 (LRIA…LMIF).

Belongs to the Lgt family.

It localises to the cell membrane. It carries out the reaction L-cysteinyl-[prolipoprotein] + a 1,2-diacyl-sn-glycero-3-phospho-(1'-sn-glycerol) = an S-1,2-diacyl-sn-glyceryl-L-cysteinyl-[prolipoprotein] + sn-glycerol 1-phosphate + H(+). It functions in the pathway protein modification; lipoprotein biosynthesis (diacylglyceryl transfer). Functionally, catalyzes the transfer of the diacylglyceryl group from phosphatidylglycerol to the sulfhydryl group of the N-terminal cysteine of a prolipoprotein, the first step in the formation of mature lipoproteins. The protein is Phosphatidylglycerol--prolipoprotein diacylglyceryl transferase of Bacillus velezensis (strain DSM 23117 / BGSC 10A6 / LMG 26770 / FZB42) (Bacillus amyloliquefaciens subsp. plantarum).